The following is a 556-amino-acid chain: Glutamine--tRNA ligase (556 aa).

A 'HIGH' region motif is present at residues 34-44 (PEPNGYLHIGH). ATP is bound by residues 35-37 (EPN) and 41-47 (HIGHAKS). L-glutamine contacts are provided by Asp67 and Tyr212. Residues Thr231, 261 to 262 (RL), and 269 to 271 (MSK) each bind ATP. Residues 268–272 (VMSKR) carry the 'KMSKS' region motif.

Belongs to the class-I aminoacyl-tRNA synthetase family. In terms of assembly, monomer.

It localises to the cytoplasm. The enzyme catalyses tRNA(Gln) + L-glutamine + ATP = L-glutaminyl-tRNA(Gln) + AMP + diphosphate. The chain is Glutamine--tRNA ligase from Vibrio parahaemolyticus serotype O3:K6 (strain RIMD 2210633).